Here is a 1273-residue protein sequence, read N- to C-terminus: MSTGAFYISSLLEKMTSSDKDFSPKSLGGSRVLDPLPWLQILAAITDWISGDRTQDLALPRFMATSDLMSELQKDSIQLDEDSERKVVRTLLRLLEDRSGEVQNLAVKCLGPLVGKVKEYQVENIVDTLCANMRSDKEQLRDIAGIGLKTVLSELPPAATGSGLAISVCRKITGQLTSAIAQQEDVAVQLEALDILSDMLSRLGAPLGTFHASLLHCLLPQLSSPRLAVRKRTVVALGHLAAACSTDLFVELADHLVDRLPGPRAPASPAAIRTLIQCLGSVGRQAGHRLGAHLDRLMPLVEEFCNLDDDELRESCLQAFEAFLRKCPKEMDPHVPNVTSLCLQYMKHDPNYNHDSDEEEQMETEDSEFSEQESEDEYSDDDDMSWKVRRAAAKCMAALISSRPDLLPDFHCTLAPALIRCFKEREENVKADIFGAYIMLLRHTRPPKGWLEAVEEPTQTGRNLNMLRAQVPLVMKALQRQLKDRNVRTRQGCFNLFTELAGVLPGCLAEHMTVLVSGIVFSLADYSSSSTIRMDALAFLQGLLGTEPAEAFHPHLPTLLPPVMACVADPFYKVAAEALLVLQELVRTLWPLDRPRLLDPEPYVGEMSTATLARLRATDLDQEVKERAISCVGHLVGHLGDRLGDDLEPTLLLLLDRLRNEITRLPAVKALTLVAVSPLRLDLQPILAEALPILASFLRKNQRALRLATLAALDALAQSQGLGLPPPAVRSVLAELPALVSENDMHVAQLAVDFLTTVTQTQPASLVEVSGPVLEELLQLLHSPLLPAGVLAATEGFLQALVGTRPPCVEYSELISLLTAPVYNQVGDGGPGLHKQVFHSLARCVAALSAACPQEAAGTASRLVCDARSPHSSTGVKVLAFLSLAEVGQVAGPGPQRELKTVLLEALGSPSEDVRAAAAYALGRVGAGNLPDFLPFLLAQIEAQPRRQYLLLHALREALGAAQPDNLKPYVEDVWALLFQRCESPEEGTRCVVAECIGKLVFVNPPFLLPRFRKQLAAGQPYTRSTVITAVKFLISDQPHSIDPLLKSFIAEFMESLQDPDLNVRRATLTFFNSAVHNKPSLVRDLLDDILPLLYQETKIRRDLIREVEMGPFKHTVDDGLDVRKAAFECMYSLLESCLGQLDICEFLNHVEDGLKDHYDIRMLTFIMLARLAALCPAPVLQRVDRLIEPLRATCTAKVKAGSVKQELEKQDELKRSAMRAVAALMTNPEVRKSPSVADFSTQIRSNPELATLFESIQKDTASGPSMDSMELS.

An N-acetylserine modification is found at Ser2. 26 HEAT repeats span residues 2 to 36, 37 to 74, 82 to 119, 121 to 157, 167 to 205, 209 to 246, 248 to 284, 292 to 329, 364 to 405, 409 to 446, 469 to 506, 554 to 591, 602 to 641, 685 to 722, 727 to 764, 768 to 807, 809 to 850, 894 to 931, 933 to 968, 970 to 1003, 1004 to 1040, 1044 to 1081, 1085 to 1121, 1142 to 1178, 1194 to 1231, and 1241 to 1273; these read STGAFYISSLLEKMTSSDKDFSPKSLGGSRVLDPL, PWLQILAAITDWISGDRTQDLALPRFMATSDLMSELQK, DSERKVVRTLLRLLEDRSGEVQNLAVKCLGPLVGKVKE, QVENIVDTLCANMRSDKEQLRDIAGIGLKTVLSELPP, SVCRKITGQLTSAIAQQEDVAVQLEALDILSDMLSRLGA, TFHASLLHCLLPQLSSPRLAVRKRTVVALGHLAAACST, LFVELADHLVDRLPGPRAPASPAAIRTLIQCLGSVGR, AHLDRLMPLVEEFCNLDDDELRESCLQAFEAFLRKCPK, TEDS…SRPD, DFHCTLAPALIRCFKEREENVKADIFGAYIMLLRHTRP, AQVPLVMKALQRQLKDRNVRTRQGCFNLFTELAGVLPG, PHLPTLLPPVMACVADPFYKVAAEALLVLQELVRTLWP, PYVGEMSTATLARLRATDLDQEVKERAISCVGHLVGHLGD, PILAEALPILASFLRKNQRALRLATLAALDALAQSQGL, PAVRSVLAELPALVSENDMHVAQLAVDFLTTVTQTQPA, EVSGPVLEELLQLLHSPLLPAGVLAATEGFLQALVGTRPP, VEYS…ALSA, GPQRELKTVLLEALGSPSEDVRAAAAYALGRVGAGNLP, FLPFLLAQIEAQPRRQYLLLHALREALGAAQPDNLK, YVEDVWALLFQRCESPEEGTRCVVAECIGKLVFV, NPPFLLPRFRKQLAAGQPYTRSTVITAVKFLISDQPH, PLLKSFIAEFMESLQDPDLNVRRATLTFFNSAVHNKPS, DLLDDILPLLYQETKIRRDLIREVEMGPFKHTVDDGL, LDICEFLNHVEDGLKDHYDIRMLTFIMLARLAALCPA, TCTAKVKAGSVKQELEKQDELKRSAMRAVAALMTNPEV, and STQIRSNPELATLFESIQKDTASGPSMDSMELS. Residues 352–383 form a disordered region; sequence YNHDSDEEEQMETEDSEFSEQESEDEYSDDDD. Residues 356–383 are compositionally biased toward acidic residues; the sequence is SDEEEQMETEDSEFSEQESEDEYSDDDD.

This sequence belongs to the CAND family. As to quaternary structure, binds TBP, CNOT3 and UBE3C. Ubiquitinated and targeted for proteasomal degradation. Detected in heart and skeletal muscle.

It localises to the nucleus. In terms of biological role, probable assembly factor of SCF (SKP1-CUL1-F-box protein) E3 ubiquitin ligase complexes that promotes the exchange of the substrate-recognition F-box subunit in SCF complexes, thereby playing a key role in the cellular repertoire of SCF complexes. In Rattus norvegicus (Rat), this protein is Cullin-associated NEDD8-dissociated protein 2 (Cand2).